The sequence spans 173 residues: Co-chaperone protein HscB homolog (173 aa).

The J domain occupies 5–77 (CHFALFELQP…PKRARYLLAM (73 aa)).

Belongs to the HscB family. As to quaternary structure, interacts with HscA and stimulates its ATPase activity.

Co-chaperone involved in the maturation of iron-sulfur cluster-containing proteins. Seems to help targeting proteins to be folded toward HscA. The protein is Co-chaperone protein HscB homolog of Pseudomonas fluorescens (strain SBW25).